The chain runs to 464 residues: tRNA(Ile)-lysidine synthase (464 aa).

30–35 is a binding site for ATP; sequence SGGVDS.

Belongs to the tRNA(Ile)-lysidine synthase family.

It is found in the cytoplasm. The catalysed reaction is cytidine(34) in tRNA(Ile2) + L-lysine + ATP = lysidine(34) in tRNA(Ile2) + AMP + diphosphate + H(+). Functionally, ligates lysine onto the cytidine present at position 34 of the AUA codon-specific tRNA(Ile) that contains the anticodon CAU, in an ATP-dependent manner. Cytidine is converted to lysidine, thus changing the amino acid specificity of the tRNA from methionine to isoleucine. The chain is tRNA(Ile)-lysidine synthase from Shewanella oneidensis (strain ATCC 700550 / JCM 31522 / CIP 106686 / LMG 19005 / NCIMB 14063 / MR-1).